The primary structure comprises 126 residues: Cell cycle protein GpsB (126 aa).

Residues 35–72 (LDLVIKDYQTYQENIDRLTADNTRLFNKVEELNRQLSA) are a coiled coil.

The protein belongs to the GpsB family. Forms polymers through the coiled coil domains. Interacts with PBP1, MreC and EzrA.

It localises to the cytoplasm. In terms of biological role, divisome component that associates with the complex late in its assembly, after the Z-ring is formed, and is dependent on DivIC and PBP2B for its recruitment to the divisome. Together with EzrA, is a key component of the system that regulates PBP1 localization during cell cycle progression. Its main role could be the removal of PBP1 from the cell pole after pole maturation is completed. Also contributes to the recruitment of PBP1 to the division complex. Not essential for septum formation. The chain is Cell cycle protein GpsB from Latilactobacillus sakei subsp. sakei (strain 23K) (Lactobacillus sakei subsp. sakei).